The primary structure comprises 266 residues: Dihydropteroate synthase (266 aa).

The 249-residue stretch at 12-260 (AAIMGILNVT…DVKANQEIVA (249 aa)) folds into the Pterin-binding domain. Residue Asn19 coordinates Mg(2+). (7,8-dihydropterin-6-yl)methyl diphosphate is bound by residues Thr59, Asp93, Asn112, Asp176, Lys212, and 248–250 (RVH).

This sequence belongs to the DHPS family. Homodimer or homotrimer. Mg(2+) is required as a cofactor.

The catalysed reaction is (7,8-dihydropterin-6-yl)methyl diphosphate + 4-aminobenzoate = 7,8-dihydropteroate + diphosphate. The protein operates within cofactor biosynthesis; tetrahydrofolate biosynthesis; 7,8-dihydrofolate from 2-amino-4-hydroxy-6-hydroxymethyl-7,8-dihydropteridine diphosphate and 4-aminobenzoate: step 1/2. Functionally, catalyzes the condensation of para-aminobenzoate (pABA) with 6-hydroxymethyl-7,8-dihydropterin diphosphate (DHPt-PP) to form 7,8-dihydropteroate (H2Pte), the immediate precursor of folate derivatives. This Streptococcus pyogenes protein is Dihydropteroate synthase (folP).